The sequence spans 148 residues: Large ribosomal subunit protein bL9 (148 aa).

This sequence belongs to the bacterial ribosomal protein bL9 family.

In terms of biological role, binds to the 23S rRNA. This chain is Large ribosomal subunit protein bL9, found in Hahella chejuensis (strain KCTC 2396).